We begin with the raw amino-acid sequence, 161 residues long: Nucleotide-binding protein Shewmr4_3156 (161 aa).

It belongs to the YajQ family.

Its function is as follows. Nucleotide-binding protein. The sequence is that of Nucleotide-binding protein Shewmr4_3156 from Shewanella sp. (strain MR-4).